Here is a 204-residue protein sequence, read N- to C-terminus: MNIFEQTPPNRRRYGLAAFIGLIAGVVSAFVKWGAEVPLPPRSPVDMFNAACGPESLIRAAGQIDCSRNFLNPPYIFLRDWLGLTDPNAAVYTFAGHVFNWVGVTHIIFSIVFAVGYCVVAEVFPKIKLWQGLLAGALAQLFVHMISFPLMGLTPPLFDLPWYENVSEIFGHLVWFWSIEIIRRDLRNRITHEPDPEIPLGSNR.

Residues 1-14 (MNIFEQTPPNRRRY) lie on the Periplasmic side of the membrane. A helical membrane pass occupies residues 15 to 35 (GLAAFIGLIAGVVSAFVKWGA). The Cytoplasmic portion of the chain corresponds to 36–100 (EVPLPPRSPV…VYTFAGHVFN (65 aa)). A helical membrane pass occupies residues 101 to 121 (WVGVTHIIFSIVFAVGYCVVA). The Periplasmic portion of the chain corresponds to 122–132 (EVFPKIKLWQG). Residues 133-153 (LLAGALAQLFVHMISFPLMGL) traverse the membrane as a helical segment. The Cytoplasmic segment spans residues 154–204 (TPPLFDLPWYENVSEIFGHLVWFWSIEIIRRDLRNRITHEPDPEIPLGSNR).

Homodimer.

The protein localises to the cell inner membrane. The sequence is that of Inner membrane protein YagU (yagU) from Escherichia coli (strain K12).